Here is a 643-residue protein sequence, read N- to C-terminus: 1-deoxy-D-xylulose-5-phosphate synthase (643 aa).

Thiamine diphosphate-binding positions include His-78 and 119 to 121 (AHS). Asp-150 provides a ligand contact to Mg(2+). Thiamine diphosphate is bound by residues 151–152 (GS), Asn-179, Tyr-288, and Glu-370. A Mg(2+)-binding site is contributed by Asn-179.

The protein belongs to the transketolase family. DXPS subfamily. As to quaternary structure, homodimer. Mg(2+) serves as cofactor. The cofactor is thiamine diphosphate.

The catalysed reaction is D-glyceraldehyde 3-phosphate + pyruvate + H(+) = 1-deoxy-D-xylulose 5-phosphate + CO2. It functions in the pathway metabolic intermediate biosynthesis; 1-deoxy-D-xylulose 5-phosphate biosynthesis; 1-deoxy-D-xylulose 5-phosphate from D-glyceraldehyde 3-phosphate and pyruvate: step 1/1. In terms of biological role, catalyzes the acyloin condensation reaction between C atoms 2 and 3 of pyruvate and glyceraldehyde 3-phosphate to yield 1-deoxy-D-xylulose-5-phosphate (DXP). This is 1-deoxy-D-xylulose-5-phosphate synthase from Brucella melitensis biotype 2 (strain ATCC 23457).